The following is a 318-amino-acid chain: Pyrimidine-specific ribonucleoside hydrolase RihA (318 aa).

His-240 is an active-site residue.

It belongs to the IUNH family. RihA subfamily.

Hydrolyzes cytidine or uridine to ribose and cytosine or uracil, respectively. In Shewanella sp. (strain ANA-3), this protein is Pyrimidine-specific ribonucleoside hydrolase RihA.